The sequence spans 317 residues: Hps1-dma1 cluster cytochrome P450 monooxygenase cyp3.1 (317 aa).

The interval 183–205 is disordered; sequence PAIETDRKTSSHSRSPTALADKQ. Position 260 (Cys260) interacts with heme.

Belongs to the cytochrome P450 family. It depends on heme as a cofactor.

It participates in secondary metabolite biosynthesis. Cytochrome P450 monooxygenase; part of the hps1-dma1 gene cluster that probably mediates the biosynthesis a derivative of cyclopiazonic acid (CPA). The hybrid polyketide synthase-nonribosomal peptide synthetase (PKS-NRPS) nps1 might incorporates acetyl-CoA, malonyl-CoA, and tryptophan (Trp) and utilizes a C-terminal redox-incompetent reductase domain to make and release the tryptophan tetramic acid, cyclo-acetoacetyl-L-tryptophan (c-AATrp), as the first intermediate in the pathway. In addition, the cluster also includes the tryptophan dimethylallyltransferase dma1, the FAD-dependent oxidoreductase toxD, the cytochrome P450 monooxygenase cyp3.1 and the methyltransferase DOTSEDRAFT_139328; the latter 2 being not present in all CPA-producing fungi but involved in additional modifications that occur in biosynthesis the of a range of CPA and CPA-like products. Further studies are required to clarify whether the CPA-like hps1-dma1 cluster is functional or a non-functional relic reflecting evolution of D.septosporum. The chain is Hps1-dma1 cluster cytochrome P450 monooxygenase cyp3.1 (cyp3.1) from Dothistroma septosporum (strain NZE10 / CBS 128990) (Red band needle blight fungus).